The chain runs to 302 residues: tRNA dimethylallyltransferase (302 aa).

Glycine 9–serine 16 lines the ATP pocket. Position 11–16 (threonine 11–serine 16) interacts with substrate. The interval aspartate 34–glutamine 37 is interaction with substrate tRNA.

Belongs to the IPP transferase family. As to quaternary structure, monomer. Requires Mg(2+) as cofactor.

It carries out the reaction adenosine(37) in tRNA + dimethylallyl diphosphate = N(6)-dimethylallyladenosine(37) in tRNA + diphosphate. Catalyzes the transfer of a dimethylallyl group onto the adenine at position 37 in tRNAs that read codons beginning with uridine, leading to the formation of N6-(dimethylallyl)adenosine (i(6)A). The chain is tRNA dimethylallyltransferase from Nostoc punctiforme (strain ATCC 29133 / PCC 73102).